Consider the following 348-residue polypeptide: MAKRKLSKQQKWRIQKIQDERTKRATRKETQLESQLSGGELSAEQEGLIIAHYGQQLAVEALEPPHAGQIFRCYVRANIDSLVTGDLVIWRAGPDNSGVIVARQPRESALKRPDKFGQLKPIAANIDQILIVIAAEPEPHHNLVDRYLVASEAVGIPPLIILNKQDLINDANRDALQQFKDQYQQLGYEWIDASTNTQSGLDDLKQHLAHKTSIFVGQSGVGKSSLIKMLLPEEDVKVGDLSENVRKGTHTTTTAKLFHLPSGGDLIDSPGIREFGLWHIDEHTLEDGFVEFRPHLGHCRFRNCRHIQEPGCALQSAQESGEILTSRMESFLRIRESLQEQDIHEENL.

Basic residues predominate over residues 1 to 14 (MAKRKLSKQQKWRI). Residues 1-39 (MAKRKLSKQQKWRIQKIQDERTKRATRKETQLESQLSGG) are disordered. Basic and acidic residues predominate over residues 16–31 (KIQDERTKRATRKETQ). Residues 116-275 (FGQLKPIAAN…LIDSPGIREF (160 aa)) enclose the CP-type G domain. Residues 163–166 (NKQD) and 217–225 (GQSGVGKSS) contribute to the GTP site. Residues cysteine 299, cysteine 304, histidine 306, and cysteine 312 each contribute to the Zn(2+) site.

This sequence belongs to the TRAFAC class YlqF/YawG GTPase family. RsgA subfamily. As to quaternary structure, monomer. Associates with 30S ribosomal subunit, binds 16S rRNA. The cofactor is Zn(2+).

It is found in the cytoplasm. Functionally, one of several proteins that assist in the late maturation steps of the functional core of the 30S ribosomal subunit. Helps release RbfA from mature subunits. May play a role in the assembly of ribosomal proteins into the subunit. Circularly permuted GTPase that catalyzes slow GTP hydrolysis, GTPase activity is stimulated by the 30S ribosomal subunit. In Hahella chejuensis (strain KCTC 2396), this protein is Small ribosomal subunit biogenesis GTPase RsgA.